We begin with the raw amino-acid sequence, 1597 residues long: Glucosyltransferase-I (1597 aa).

Residues 1–38 (MEKNERFKMHKVKKRWVTISVASATMLASALGASVASA) form the signal peptide. The interval 52–120 (LTADQTTTNQ…QTTTNANEAK (69 aa)) is disordered. Residues 53-114 (TADQTTTNQD…STDTAAQTTT (62 aa)) show a composition bias toward low complexity. Cell wall-binding repeat units follow at residues 157-176 (MSNV…DGNV) and 178-197 (KNFA…TGAY). The segment at 200–1050 (TSKVEADKSG…DQASNKYLNV (851 aa)) is catalytic; approximate. 22 Cell wall-binding repeats span residues 1089–1108 (TDSF…DGYM), 1109–1128 (VTGA…NGAA), 1130–1150 (RNTV…DGKR), 1152–1172 (ENGY…GVMA), 1173–1191 (LGLT…DGVQ), 1193–1214 (KDKI…NGNA), 1216–1236 (TNTF…DGVA), 1237–1256 (VTGA…NGQQ), 1258–1279 (KGDF…SGDM), 1281–1301 (TNTF…DGAA), 1302–1321 (VTGA…NGQQ), 1323–1343 (KGDI…QTGE), 1344–1365 (QVFN…DGTA), 1366–1380 (QTQA…KDGS), 1415–1434 (LTGA…NGHQ), 1436–1457 (KGQL…SGDQ), 1459–1478 (FNKS…DGTA), 1485–1505 (KGQT…EGQY), 1508–1527 (GSGW…DGKV), 1528–1547 (LTGL…NGIQ), 1549–1570 (KGKA…SGSM), and 1572–1591 (TNQW…DGAA). The tract at residues 1099 to 1597 (LYYFGQDGYM…DGAAVYRGWN (499 aa)) is glucan-binding; approximate.

The protein belongs to the glycosyl hydrolase 70 family.

It is found in the secreted. The enzyme catalyses [(1-&gt;6)-alpha-D-glucosyl](n) + sucrose = [(1-&gt;6)-alpha-D-glucosyl](n+1) + D-fructose. Functionally, production of extracellular glucans, that are thought to play a key role in the development of the dental plaque because of their ability to adhere to smooth surfaces and mediate the aggregation of bacterial cells and food debris. The protein is Glucosyltransferase-I (gtfI) of Streptococcus downei (Streptococcus sobrinus).